The primary structure comprises 327 residues: Opticin (327 aa).

The signal sequence occupies residues 1–19 (MKLPAFLSLLALVLLEAGT). Sulfotyrosine occurs at positions 61 and 67. The LRRNT domain maps to 111 to 148 (VLGSPNSHGLPTCLICVCLGSSVYCDDADLENIPPLPK). 7 LRR repeats span residues 149 to 170 (TTTY…DFKG), 173 to 194 (KLKR…ALRL), 197 to 218 (ALQD…PPAI), 219 to 237 (EVLD…QPEA), 243 to 263 (KLQF…PLPP), 264 to 285 (SLRS…AFCD), and 295 to 315 (WLED…PSAY). A disulfide bridge connects residues Cys284 and Cys317.

Belongs to the small leucine-rich proteoglycan (SLRP) family. SLRP class III subfamily. Homodimer. In terms of processing, O-glycosylated. Proteolytically cleaved by MMP1, MMP2, MMP3, MMP7, MMP8, MMP9, ADAMTS4, and ADAMTS5. Proteolytically cleaved by MMP13. Post-translationally, sulfated on tyrosine residues. Ocular tissues, cartilage, ligament, skin, muscle and testes.

The protein localises to the secreted. It is found in the extracellular space. It localises to the extracellular matrix. Functionally, inhibits angiogenesis in the vitreous humor of the eye, and therefore represses neovascularization. Binds collagen fibrils. May be involved in collagen fiber organization via regulation of other members of the small leucine-rich repeat proteoglycan superfamily. In Canis lupus familiaris (Dog), this protein is Opticin (OPTC).